The sequence spans 128 residues: uncharacterized protein (128 aa).

The stretch at 95–123 (IIDFATAKRELDRLTEEIATLKGELAQDK) forms a coiled coil.

Its subcellular location is the cellular thylakoid membrane. This is an uncharacterized protein from Synechocystis sp. (strain ATCC 27184 / PCC 6803 / Kazusa).